Consider the following 309-residue polypeptide: Putative F-box protein At4g05475 (309 aa).

A disordered region spans residues Met-1 to Ser-26. The region spanning Arg-37 to Ile-84 is the F-box domain.

The polypeptide is Putative F-box protein At4g05475 (Arabidopsis thaliana (Mouse-ear cress)).